Reading from the N-terminus, the 98-residue chain is Class II hydrophobin 2 (98 aa).

Residues Met1–Ala21 form the signal peptide. 4 disulfide bridges follow: Cys34–Cys80, Cys41–Cys71, Cys42–Cys54, and Cys81–Cys92.

Belongs to the cerato-ulmin hydrophobin family.

The protein resides in the secreted. It is found in the cell wall. Its function is as follows. Aerial growth, conidiation, and dispersal of filamentous fungi in the environment rely upon a capability of their secreting small amphipathic proteins called hydrophobins (HPBs) with low sequence identity. Class I can self-assemble into an outermost layer of rodlet bundles on aerial cell surfaces, conferring cellular hydrophobicity that supports fungal growth, development and dispersal; whereas Class II form highly ordered films at water-air interfaces through intermolecular interactions but contribute nothing to the rodlet structure. In Botryotinia fuckeliana, hydrophobins are not involved in conferring surface hydrophobicity to conidia and aerial hyphae and their function in sclerotia and fruiting bodies remains to be investigated. This chain is Class II hydrophobin 2, found in Botryotinia fuckeliana (strain B05.10) (Noble rot fungus).